The chain runs to 429 residues: Serine hydroxymethyltransferase (429 aa).

Residues leucine 127 and 131-133 each bind (6S)-5,6,7,8-tetrahydrofolate; that span reads GHL. N6-(pyridoxal phosphate)lysine is present on lysine 236. A (6S)-5,6,7,8-tetrahydrofolate-binding site is contributed by glutamate 252.

This sequence belongs to the SHMT family. In terms of assembly, homodimer. Requires pyridoxal 5'-phosphate as cofactor.

Its subcellular location is the cytoplasm. The enzyme catalyses (6R)-5,10-methylene-5,6,7,8-tetrahydrofolate + glycine + H2O = (6S)-5,6,7,8-tetrahydrofolate + L-serine. The protein operates within one-carbon metabolism; tetrahydrofolate interconversion. It functions in the pathway amino-acid biosynthesis; glycine biosynthesis; glycine from L-serine: step 1/1. Catalyzes the reversible interconversion of serine and glycine with tetrahydrofolate (THF) serving as the one-carbon carrier. This reaction serves as the major source of one-carbon groups required for the biosynthesis of purines, thymidylate, methionine, and other important biomolecules. Also exhibits THF-independent aldolase activity toward beta-hydroxyamino acids, producing glycine and aldehydes, via a retro-aldol mechanism. The sequence is that of Serine hydroxymethyltransferase from Rhodospirillum centenum (strain ATCC 51521 / SW).